Consider the following 1401-residue polypeptide: DNA-directed RNA polymerase subunit beta (1401 aa).

Belongs to the RNA polymerase beta chain family. The RNAP catalytic core consists of 2 alpha, 1 beta, 1 beta' and 1 omega subunit. When a sigma factor is associated with the core the holoenzyme is formed, which can initiate transcription.

It carries out the reaction RNA(n) + a ribonucleoside 5'-triphosphate = RNA(n+1) + diphosphate. In terms of biological role, DNA-dependent RNA polymerase catalyzes the transcription of DNA into RNA using the four ribonucleoside triphosphates as substrates. The chain is DNA-directed RNA polymerase subunit beta from Zymomonas mobilis subsp. mobilis (strain ATCC 31821 / ZM4 / CP4).